Reading from the N-terminus, the 349-residue chain is Methylglutaconyl-CoA hydratase 1, mitochondrial (349 aa).

The N-terminal 37 residues, 1 to 37 (MPPVSRILSYAPRVAIRPSSQLARPARAFAVGTVRYY), are a transit peptide targeting the mitochondrion.

This sequence belongs to the enoyl-CoA hydratase/isomerase family. As to quaternary structure, homohexamer.

It localises to the mitochondrion. It catalyses the reaction (3S)-3-hydroxy-3-methylglutaryl-CoA = 3-methyl-(2E)-glutaconyl-CoA + H2O. It participates in amino-acid degradation; L-leucine degradation; (S)-3-hydroxy-3-methylglutaryl-CoA from 3-isovaleryl-CoA: step 3/3. 3-methylglutaconyl-CoA hydratase that catalyzes the fifth step in the leucine degradation pathway, the reversible hydration of 3-methylglutaconyl-CoA (3-MG-CoA) to 3-hydroxy-3-methylglutaryl-CoA (HMG-CoA). Involved in vegetative growth, conidiation and in the stress response. Controls mitochondrial morphology and mitophagy, which are critical for the infectious growth of the pathogen. The sequence is that of Methylglutaconyl-CoA hydratase 1, mitochondrial from Pyricularia oryzae (strain 70-15 / ATCC MYA-4617 / FGSC 8958) (Rice blast fungus).